The sequence spans 93 residues: UPF0728 protein C10orf53 homolog (93 aa).

Belongs to the UPF0728 family.

In Xenopus tropicalis (Western clawed frog), this protein is UPF0728 protein C10orf53 homolog.